Consider the following 269-residue polypeptide: Tryptophan synthase alpha chain (269 aa).

Catalysis depends on proton acceptor residues glutamate 49 and aspartate 60.

This sequence belongs to the TrpA family. In terms of assembly, tetramer of two alpha and two beta chains.

The catalysed reaction is (1S,2R)-1-C-(indol-3-yl)glycerol 3-phosphate + L-serine = D-glyceraldehyde 3-phosphate + L-tryptophan + H2O. Its pathway is amino-acid biosynthesis; L-tryptophan biosynthesis; L-tryptophan from chorismate: step 5/5. Its function is as follows. The alpha subunit is responsible for the aldol cleavage of indoleglycerol phosphate to indole and glyceraldehyde 3-phosphate. The chain is Tryptophan synthase alpha chain from Actinobacillus pleuropneumoniae serotype 5b (strain L20).